A 343-amino-acid chain; its full sequence is N-acetyl-gamma-glutamyl-phosphate reductase (343 aa).

Cys146 is a catalytic residue.

This sequence belongs to the NAGSA dehydrogenase family. Type 1 subfamily.

Its subcellular location is the cytoplasm. It catalyses the reaction N-acetyl-L-glutamate 5-semialdehyde + phosphate + NADP(+) = N-acetyl-L-glutamyl 5-phosphate + NADPH + H(+). It functions in the pathway amino-acid biosynthesis; L-arginine biosynthesis; N(2)-acetyl-L-ornithine from L-glutamate: step 3/4. In terms of biological role, catalyzes the NADPH-dependent reduction of N-acetyl-5-glutamyl phosphate to yield N-acetyl-L-glutamate 5-semialdehyde. The protein is N-acetyl-gamma-glutamyl-phosphate reductase of Acidothermus cellulolyticus (strain ATCC 43068 / DSM 8971 / 11B).